The primary structure comprises 894 residues: DNA mismatch repair protein MutS (894 aa).

607-614 is a binding site for ATP; it reads GPNMSGKS.

This sequence belongs to the DNA mismatch repair MutS family.

Its function is as follows. This protein is involved in the repair of mismatches in DNA. It is possible that it carries out the mismatch recognition step. This protein has a weak ATPase activity. The chain is DNA mismatch repair protein MutS from Bacillus cereus (strain ZK / E33L).